The primary structure comprises 263 residues: Acyl-[acyl-carrier-protein]--UDP-N-acetylglucosamine O-acyltransferase (263 aa).

The protein belongs to the transferase hexapeptide repeat family. LpxA subfamily. Homotrimer.

The protein localises to the cytoplasm. It catalyses the reaction a (3R)-hydroxyacyl-[ACP] + UDP-N-acetyl-alpha-D-glucosamine = a UDP-3-O-[(3R)-3-hydroxyacyl]-N-acetyl-alpha-D-glucosamine + holo-[ACP]. It participates in glycolipid biosynthesis; lipid IV(A) biosynthesis; lipid IV(A) from (3R)-3-hydroxytetradecanoyl-[acyl-carrier-protein] and UDP-N-acetyl-alpha-D-glucosamine: step 1/6. In terms of biological role, involved in the biosynthesis of lipid A, a phosphorylated glycolipid that anchors the lipopolysaccharide to the outer membrane of the cell. This chain is Acyl-[acyl-carrier-protein]--UDP-N-acetylglucosamine O-acyltransferase, found in Stenotrophomonas maltophilia (strain R551-3).